The primary structure comprises 359 residues: Histidinol-phosphate aminotransferase (359 aa).

At Lys217 the chain carries N6-(pyridoxal phosphate)lysine.

This sequence belongs to the class-II pyridoxal-phosphate-dependent aminotransferase family. Histidinol-phosphate aminotransferase subfamily. In terms of assembly, homodimer. Pyridoxal 5'-phosphate serves as cofactor.

It carries out the reaction L-histidinol phosphate + 2-oxoglutarate = 3-(imidazol-4-yl)-2-oxopropyl phosphate + L-glutamate. It functions in the pathway amino-acid biosynthesis; L-histidine biosynthesis; L-histidine from 5-phospho-alpha-D-ribose 1-diphosphate: step 7/9. This is Histidinol-phosphate aminotransferase from Salmonella typhi.